We begin with the raw amino-acid sequence, 145 residues long: 3-dehydroquinate dehydratase (145 aa).

The active-site Proton acceptor is tyrosine 24. Residues asparagine 75, histidine 81, and aspartate 88 each contribute to the substrate site. Histidine 101 serves as the catalytic Proton donor. Substrate contacts are provided by residues 102-103 (IS) and arginine 112.

Belongs to the type-II 3-dehydroquinase family. As to quaternary structure, homododecamer.

The catalysed reaction is 3-dehydroquinate = 3-dehydroshikimate + H2O. It functions in the pathway metabolic intermediate biosynthesis; chorismate biosynthesis; chorismate from D-erythrose 4-phosphate and phosphoenolpyruvate: step 3/7. In terms of biological role, catalyzes a trans-dehydration via an enolate intermediate. The sequence is that of 3-dehydroquinate dehydratase from Rhizobium etli (strain CIAT 652).